The primary structure comprises 551 residues: Hedycaryol synthase TPS20CT (551 aa).

Positions 266, 303, 307, 444, and 447 each coordinate (2E,6E)-farnesyl diphosphate. Asp303 and Asp307 together coordinate Mg(2+). A DDXXD motif motif is present at residues 303 to 307 (DDIYD). Residues Asp447, Ser451, and Glu455 each contribute to the Mg(2+) site.

It belongs to the terpene synthase family. Tpsb subfamily. It depends on Mg(2+) as a cofactor. Mn(2+) serves as cofactor. As to expression, highly expressed in glandular trichomes.

It carries out the reaction (2E,6E)-farnesyl diphosphate + H2O = (2E,6E)-hedycaryol + diphosphate. Its pathway is secondary metabolite biosynthesis; terpenoid biosynthesis. Involved in sesquiterpene olefins biosynthesis, constituants of cannabinoids and terpenoids-rich resins. Catalyzes primarily the conversion of (2E)-farnesyl diphosphate to hedycaryol, which is spontaneously converted to elemol as a thermal degradation product. In Cannabis sativa (Hemp), this protein is Hedycaryol synthase TPS20CT.